The chain runs to 101 residues: Small ribosomal subunit protein uS14 (101 aa).

Belongs to the universal ribosomal protein uS14 family. In terms of assembly, part of the 30S ribosomal subunit. Contacts proteins S3 and S10.

Its function is as follows. Binds 16S rRNA, required for the assembly of 30S particles and may also be responsible for determining the conformation of the 16S rRNA at the A site. The chain is Small ribosomal subunit protein uS14 from Burkholderia lata (strain ATCC 17760 / DSM 23089 / LMG 22485 / NCIMB 9086 / R18194 / 383).